Consider the following 355-residue polypeptide: Trans-enoyl reductase (355 aa).

45–48 provides a ligand contact to NADP(+); the sequence is VDTK. 131–138 contacts substrate; it reads ISFMTTGL. Residues 166–169, 189–192, Y207, and 254–255 contribute to the NADP(+) site; these read SSAT, SPRN, and LE. 275-279 serves as a coordination point for substrate; sequence GPQML. Position 344–345 (344–345) interacts with NADP(+); sequence IS.

Belongs to the zinc-containing alcohol dehydrogenase family. As to quaternary structure, monomer.

It carries out the reaction L-serine + 7 malonyl-CoA + acetyl-CoA + 2 S-adenosyl-L-methionine + ATP + 8 NADPH + 11 H(+) = (5S)-3-[(2E,6R,8E,10E,12E)-2,6-dimethyltetradeca-2,8,10,12-tetraenoyl]-5-(hydroxymethyl)pyrrolidine-2,4-dione + AMP + 2 S-adenosyl-L-homocysteine + 7 CO2 + diphosphate + 8 NADP(+) + 8 CoA + 6 H2O. It functions in the pathway mycotoxin biosynthesis. Functionally, hybrid PKS-NRPS synthetase; part of the gene cluster that mediates the biosynthesis of trichosetin, a trans-fused decalin-containing tetramic acid with antimicrobial activity. The PKS module of PKS-NRPS1 together with the enoylreductase (ER) catalyze the formation of the polyketide unit which is then conjugated to L-serine by the condensation domain of the PKS-NRPS1 NRPS module. Activity of the Dieckmann cyclase domain (RED) results in release of the Dieckmann product intermediate. Diels-Alderase (DA) is involved in endo-selective Diels-Alder cycloaddition to form the decalin ring, leading to the production of N-desmethylequisetin also called trichosetin. The cluster does not contain the equisetin N-methyltransferase and consequently, trichosetin is isolated as final product. In Gibberella fujikuroi (strain CBS 195.34 / IMI 58289 / NRRL A-6831) (Bakanae and foot rot disease fungus), this protein is Trans-enoyl reductase.